A 202-amino-acid chain; its full sequence is Large ribosomal subunit protein mL40 (202 aa).

The segment at 42–79 (IQHQQTASYASKGKSGPPAGMFSGQKAGSKKSKGPKQV) is disordered.

Belongs to the mitochondrion-specific ribosomal protein mL40 family. In terms of assembly, component of the mitochondrial large ribosomal subunit (mt-LSU). Mature N.crassa 74S mitochondrial ribosomes consist of a small (37S) and a large (54S) subunit. The 37S small subunit contains a 16S ribosomal RNA (16S mt-rRNA) and 32 different proteins. The 54S large subunit contains a 23S rRNA (23S mt-rRNA) and 42 different proteins. mL40 is binding to NAD.

It is found in the mitochondrion. Component of the mitochondrial ribosome (mitoribosome), a dedicated translation machinery responsible for the synthesis of mitochondrial genome-encoded proteins, including at least some of the essential transmembrane subunits of the mitochondrial respiratory chain. The mitoribosomes are attached to the mitochondrial inner membrane and translation products are cotranslationally integrated into the membrane. In Neurospora crassa (strain ATCC 24698 / 74-OR23-1A / CBS 708.71 / DSM 1257 / FGSC 987), this protein is Large ribosomal subunit protein mL40 (mrpl28).